The primary structure comprises 696 residues: Polyribonucleotide nucleotidyltransferase (696 aa).

The Mg(2+) site is built by aspartate 489 and aspartate 495. Positions 556-615 (PQYVTMKINPEKIRDVIGKGGVVIREITEATNCAIDISDDGTIKIAAHTTEEGEAAKRRI) constitute a KH domain. Residues 625-693 (GKVYEGTVVK…RQGRVRLSMK (69 aa)) enclose the S1 motif domain.

This sequence belongs to the polyribonucleotide nucleotidyltransferase family. Component of the RNA degradosome, which is a multiprotein complex involved in RNA processing and mRNA degradation. Mg(2+) serves as cofactor.

Its subcellular location is the cytoplasm. It catalyses the reaction RNA(n+1) + phosphate = RNA(n) + a ribonucleoside 5'-diphosphate. Involved in mRNA degradation. Catalyzes the phosphorolysis of single-stranded polyribonucleotides processively in the 3'- to 5'-direction. The protein is Polyribonucleotide nucleotidyltransferase of Coxiella burnetii (strain CbuK_Q154) (Coxiella burnetii (strain Q154)).